A 473-amino-acid chain; its full sequence is Photosystem II CP43 reaction center protein (473 aa).

The propeptide occupies 1–14 (MKTLYSLRRFYPVE). Residue Thr-15 is modified to N-acetylthreonine. The residue at position 15 (Thr-15) is a Phosphothreonine. The next 5 helical transmembrane spans lie at 69-93 (LFEV…PHLA), 134-155 (LLGP…KDRN), 178-200 (KALY…RKIT), 255-275 (KPFA…LSYS), and 291-312 (WFNN…ASQA). Position 367 (Glu-367) interacts with [CaMn4O5] cluster. Residues 447–471 (RARAAAAGFEKGIDRDFEPVLSMTP) form a helical membrane-spanning segment.

The protein belongs to the PsbB/PsbC family. PsbC subfamily. As to quaternary structure, PSII is composed of 1 copy each of membrane proteins PsbA, PsbB, PsbC, PsbD, PsbE, PsbF, PsbH, PsbI, PsbJ, PsbK, PsbL, PsbM, PsbT, PsbX, PsbY, PsbZ, Psb30/Ycf12, at least 3 peripheral proteins of the oxygen-evolving complex and a large number of cofactors. It forms dimeric complexes. Binds multiple chlorophylls and provides some of the ligands for the Ca-4Mn-5O cluster of the oxygen-evolving complex. It may also provide a ligand for a Cl- that is required for oxygen evolution. PSII binds additional chlorophylls, carotenoids and specific lipids. is required as a cofactor.

The protein resides in the plastid. It is found in the chloroplast thylakoid membrane. Functionally, one of the components of the core complex of photosystem II (PSII). It binds chlorophyll and helps catalyze the primary light-induced photochemical processes of PSII. PSII is a light-driven water:plastoquinone oxidoreductase, using light energy to abstract electrons from H(2)O, generating O(2) and a proton gradient subsequently used for ATP formation. The chain is Photosystem II CP43 reaction center protein from Morus indica (Mulberry).